A 378-amino-acid polypeptide reads, in one-letter code: MYEKILIRYGELTLKGKNRDSFIAQLARNIKLITGEYPETKYDRMFLTYSDANLEKLQYVFGITSYSPVIFCENNLEKITNSAIKLVNKDDKTFKISARRNNKKFELTSAEINQKVGASVLKHYPLIKVDVHNPECNINIEVRSDKTYLFSKTYEALGGLPVGISGSTLHLMSGGIDSPVAAFKLMKRGLKVSFLSFISPPQTDEKTIGKIKDLVSVLSKYQGKSHLYLANYSKLMNYISFTSNESYRINLMRRSFYRIASKFAKGKNIMTLSNGENLGQVASQTIESLSTIASASDLLILRPLIANDKVETINIAKQIKTYDISIEKAKETCELFAPKNPVTKPNLATALRLEEELTQLKDLEEELLANEIEHYTIE.

Residues 51–153 (DANLEKLQYV…SDKTYLFSKT (103 aa)) enclose the THUMP domain. ATP is bound by residues 171–172 (LM), 196–197 (SF), R253, G275, and Q284.

Belongs to the ThiI family.

It localises to the cytoplasm. It carries out the reaction [ThiI sulfur-carrier protein]-S-sulfanyl-L-cysteine + a uridine in tRNA + 2 reduced [2Fe-2S]-[ferredoxin] + ATP + H(+) = [ThiI sulfur-carrier protein]-L-cysteine + a 4-thiouridine in tRNA + 2 oxidized [2Fe-2S]-[ferredoxin] + AMP + diphosphate. The enzyme catalyses [ThiS sulfur-carrier protein]-C-terminal Gly-Gly-AMP + S-sulfanyl-L-cysteinyl-[cysteine desulfurase] + AH2 = [ThiS sulfur-carrier protein]-C-terminal-Gly-aminoethanethioate + L-cysteinyl-[cysteine desulfurase] + A + AMP + 2 H(+). It functions in the pathway cofactor biosynthesis; thiamine diphosphate biosynthesis. Catalyzes the ATP-dependent transfer of a sulfur to tRNA to produce 4-thiouridine in position 8 of tRNAs, which functions as a near-UV photosensor. Also catalyzes the transfer of sulfur to the sulfur carrier protein ThiS, forming ThiS-thiocarboxylate. This is a step in the synthesis of thiazole, in the thiamine biosynthesis pathway. The sulfur is donated as persulfide by IscS. The protein is Probable tRNA sulfurtransferase of Mycoplasmopsis agalactiae (strain NCTC 10123 / CIP 59.7 / PG2) (Mycoplasma agalactiae).